The following is a 211-amino-acid chain: Redox-sensing transcriptional repressor Rex (211 aa).

The H-T-H motif DNA-binding region spans 18 to 57 (LYYRFLKNLHASGKQRVSSAELSEAVKVDSATIRRDFSYF). 92 to 97 (GVGNLG) provides a ligand contact to NAD(+).

This sequence belongs to the transcriptional regulatory Rex family. As to quaternary structure, homodimer.

It localises to the cytoplasm. Modulates transcription in response to changes in cellular NADH/NAD(+) redox state. This is Redox-sensing transcriptional repressor Rex from Anoxybacillus flavithermus (strain DSM 21510 / WK1).